A 482-amino-acid polypeptide reads, in one-letter code: Probable glycine dehydrogenase (decarboxylating) subunit 2 (482 aa).

The residue at position 264 (Lys264) is an N6-(pyridoxal phosphate)lysine.

Belongs to the GcvP family. C-terminal subunit subfamily. The glycine cleavage system is composed of four proteins: P, T, L and H. In this organism, the P 'protein' is a heterodimer of two subunits. Pyridoxal 5'-phosphate serves as cofactor.

The enzyme catalyses N(6)-[(R)-lipoyl]-L-lysyl-[glycine-cleavage complex H protein] + glycine + H(+) = N(6)-[(R)-S(8)-aminomethyldihydrolipoyl]-L-lysyl-[glycine-cleavage complex H protein] + CO2. Functionally, the glycine cleavage system catalyzes the degradation of glycine. The P protein binds the alpha-amino group of glycine through its pyridoxal phosphate cofactor; CO(2) is released and the remaining methylamine moiety is then transferred to the lipoamide cofactor of the H protein. The protein is Probable glycine dehydrogenase (decarboxylating) subunit 2 of Treponema denticola (strain ATCC 35405 / DSM 14222 / CIP 103919 / JCM 8153 / KCTC 15104).